The following is a 164-amino-acid chain: S-ribosylhomocysteine lyase (164 aa).

Residues histidine 54, histidine 58, and cysteine 128 each coordinate Fe cation.

Belongs to the LuxS family. Homodimer. The cofactor is Fe cation.

The enzyme catalyses S-(5-deoxy-D-ribos-5-yl)-L-homocysteine = (S)-4,5-dihydroxypentane-2,3-dione + L-homocysteine. In terms of biological role, involved in the synthesis of autoinducer 2 (AI-2) which is secreted by bacteria and is used to communicate both the cell density and the metabolic potential of the environment. The regulation of gene expression in response to changes in cell density is called quorum sensing. Catalyzes the transformation of S-ribosylhomocysteine (RHC) to homocysteine (HC) and 4,5-dihydroxy-2,3-pentadione (DPD). This chain is S-ribosylhomocysteine lyase, found in Campylobacter jejuni subsp. doylei (strain ATCC BAA-1458 / RM4099 / 269.97).